The primary structure comprises 454 residues: Probable ECA polymerase (454 aa).

The next 11 membrane-spanning stretches (helical) occupy residues 3 to 23, 39 to 59, 61 to 81, 119 to 139, 154 to 174, 180 to 200, 201 to 221, 222 to 242, 340 to 360, 377 to 397, and 409 to 429; these read LGQF…ILTL, FSML…MLVF, FGVA…ATAF, LALV…FLLF, GVAL…VYFL, AWFF…VIVG, GTRA…IVRG, WITL…MFWL, LVVM…GLII, YKAA…IVLA, and VFFC…YWLF.

Belongs to the WzyE family. In terms of assembly, probably part of a complex composed of WzxE, WzyE and WzzE.

It localises to the cell inner membrane. It participates in bacterial outer membrane biogenesis; enterobacterial common antigen biosynthesis. Functionally, probably involved in the polymerization of enterobacterial common antigen (ECA) trisaccharide repeat units. This chain is Probable ECA polymerase, found in Yersinia pseudotuberculosis serotype O:1b (strain IP 31758).